The following is an 852-amino-acid chain: Probable LRR receptor-like serine/threonine-protein kinase At1g05700 (852 aa).

An N-terminal signal peptide occupies residues 1–25 (MEEFRFLYLIYSAAFALCLVVSVLA). Topologically, residues 26–510 (QDQSGFISID…SCRKSNSKKL (485 aa)) are extracellular. N-linked (GlcNAc...) asparagine glycosylation is found at Asn138, Asn182, Asn231, Asn240, Asn258, Asn293, Asn400, Asn415, and Asn431. LRR repeat units follow at residues 410-432 (RITSLNLSSSGLTGHISSSFSNL), 434-457 (MIQELDLSNNGLTGDIPEFLSKLK), and 458-479 (FLRVLNLENNTLTGSVPSELLE). Residue Asn466 is glycosylated (N-linked (GlcNAc...) asparagine). A helical transmembrane segment spans residues 511-531 (VIPLVASFAALFILLLLSGVF). At 532–852 (WRIRNRRNKS…LQREESNKNY (321 aa)) the chain is on the cytoplasmic side. Phosphothreonine is present on Thr561. Residues 570–843 (NNFGQVLGKG…HIVRGLNECL (274 aa)) form the Protein kinase domain. Residues 576-584 (LGKGGFGTV) and Lys597 contribute to the ATP site. Tyr642 carries the phosphotyrosine modification. The active-site Proton acceptor is the Asp693. Phosphoserine is present on residues Ser697 and Ser727. 2 positions are modified to phosphothreonine: Thr728 and Thr733.

Belongs to the protein kinase superfamily. Ser/Thr protein kinase family.

The protein localises to the membrane. The enzyme catalyses L-seryl-[protein] + ATP = O-phospho-L-seryl-[protein] + ADP + H(+). The catalysed reaction is L-threonyl-[protein] + ATP = O-phospho-L-threonyl-[protein] + ADP + H(+). This is Probable LRR receptor-like serine/threonine-protein kinase At1g05700 from Arabidopsis thaliana (Mouse-ear cress).